The sequence spans 336 residues: Phenylalanine--tRNA ligase alpha subunit (336 aa).

Mg(2+) is bound at residue Glu-257.

It belongs to the class-II aminoacyl-tRNA synthetase family. Phe-tRNA synthetase alpha subunit type 1 subfamily. As to quaternary structure, tetramer of two alpha and two beta subunits. Mg(2+) serves as cofactor.

Its subcellular location is the cytoplasm. It catalyses the reaction tRNA(Phe) + L-phenylalanine + ATP = L-phenylalanyl-tRNA(Phe) + AMP + diphosphate + H(+). This Xanthomonas campestris pv. campestris (strain 8004) protein is Phenylalanine--tRNA ligase alpha subunit.